The sequence spans 379 residues: Putative clathrin assembly protein At1g68110 (379 aa).

Residues 26–158 (NSSYRNADLE…SFLSDQIHRL (133 aa)) form the ENTH domain.

The protein localises to the membrane. The protein resides in the clathrin-coated pit. It is found in the golgi apparatus. Its subcellular location is the cytoplasmic vesicle. It localises to the clathrin-coated vesicle. This Arabidopsis thaliana (Mouse-ear cress) protein is Putative clathrin assembly protein At1g68110.